Here is a 415-residue protein sequence, read N- to C-terminus: Multidrug resistance protein MdtA (415 aa).

The N-terminal stretch at 1–21 (MKGSYKSRWVIVIVVVIAAIA) is a signal peptide. Polar residues predominate over residues 31–47 (DSQSAAPGATKQAQQSP). Disordered stretches follow at residues 31–56 (DSQS…GMRA) and 390–415 (VVET…GARS). Over residues 399–415 (PEEKATSREYAKKGARS) the composition is skewed to basic and acidic residues.

The protein belongs to the membrane fusion protein (MFP) (TC 8.A.1) family. In terms of assembly, part of a tripartite efflux system composed of MdtA, MdtB and MdtC.

The protein resides in the cell inner membrane. Functionally, the MdtABC tripartite complex confers resistance against novobiocin and deoxycholate. The protein is Multidrug resistance protein MdtA of Escherichia coli O6:H1 (strain CFT073 / ATCC 700928 / UPEC).